A 139-amino-acid chain; its full sequence is Holo-[acyl-carrier-protein] synthase (139 aa).

Asp8 and Glu61 together coordinate Mg(2+).

This sequence belongs to the P-Pant transferase superfamily. AcpS family. Mg(2+) is required as a cofactor.

The protein resides in the cytoplasm. It carries out the reaction apo-[ACP] + CoA = holo-[ACP] + adenosine 3',5'-bisphosphate + H(+). Transfers the 4'-phosphopantetheine moiety from coenzyme A to a Ser of acyl-carrier-protein. The protein is Holo-[acyl-carrier-protein] synthase of Rhodopseudomonas palustris (strain BisB5).